The sequence spans 404 residues: Probable eukaryotic initiation factor 4A (404 aa).

Residues 1–28 (MAQQGKVEPQDQDSFLDDQPGIRPIPSF) are disordered. The Q motif signature appears at 26–54 (PSFDDMPLHQNLLRGIYSHGFEKPSSIQQ). The 175-residue stretch at 57-231 (IVPFTRGGDI…KKFMRDPTRI (175 aa)) folds into the Helicase ATP-binding domain. 70–77 (AQSGTGKT) is an ATP binding site. Positions 179–182 (DEAD) match the DEAD box motif. In terms of domain architecture, Helicase C-terminal spans 242-402 (GIKQFFIAVE…ELPVDFAAYL (161 aa)).

It belongs to the DEAD box helicase family. eIF4A subfamily. EIF4F is a multi-subunit complex, the composition of which varies with external and internal environmental conditions. It is composed of at least EIF4A, EIF4E and EIF4G.

The catalysed reaction is ATP + H2O = ADP + phosphate + H(+). In terms of biological role, ATP-dependent RNA helicase which is a subunit of the eIF4F complex involved in cap recognition and is required for mRNA binding to ribosome. In the current model of translation initiation, eIF4A unwinds RNA secondary structures in the 5'-UTR of mRNAs which is necessary to allow efficient binding of the small ribosomal subunit, and subsequent scanning for the initiator codon. The sequence is that of Probable eukaryotic initiation factor 4A from Trypanosoma brucei brucei (strain 927/4 GUTat10.1).